The primary structure comprises 325 residues: ATP-dependent (S)-NAD(P)H-hydrate dehydratase (325 aa).

Residues 9 to 315 (LLKKVYNMVP…EHVHTAFLNV (307 aa)) enclose the YjeF C-terminal domain. Residues Gly-119 and 172–178 (NVVEFGR) contribute to the (6S)-NADPHX site. ATP-binding positions include 211–215 (KGAKD) and 230–239 (GGLKRSGGQG). Asp-240 provides a ligand contact to (6S)-NADPHX.

This sequence belongs to the NnrD/CARKD family. Mg(2+) serves as cofactor.

The protein localises to the cytoplasm. The enzyme catalyses (6S)-NADHX + ATP = ADP + phosphate + NADH + H(+). It catalyses the reaction (6S)-NADPHX + ATP = ADP + phosphate + NADPH + H(+). In terms of biological role, catalyzes the dehydration of the S-form of NAD(P)HX at the expense of ATP, which is converted to ADP. Together with NAD(P)HX epimerase, which catalyzes the epimerization of the S- and R-forms, the enzyme allows the repair of both epimers of NAD(P)HX, a damaged form of NAD(P)H that is a result of enzymatic or heat-dependent hydration. The sequence is that of ATP-dependent (S)-NAD(P)H-hydrate dehydratase from Phaeosphaeria nodorum (strain SN15 / ATCC MYA-4574 / FGSC 10173) (Glume blotch fungus).